Here is a 554-residue protein sequence, read N- to C-terminus: (E)-beta-caryophyllene synthase (554 aa).

Mn(2+) contacts are provided by aspartate 313 and aspartate 317. A DDXXD motif motif is present at residues aspartate 313–aspartate 317. Homodimerization stretches follow at residues tyrosine 319–leucine 325 and glutamate 391–isoleucine 427. Residues aspartate 457 and glutamate 465 each contribute to the Mn(2+) site.

It belongs to the terpene synthase family. In terms of assembly, homodimer. The cofactor is Mn(2+). It depends on Mg(2+) as a cofactor. In terms of tissue distribution, expressed in peltate glandular trichomes. Present at low levels in flowers, leaves and stems.

It carries out the reaction (2E,6E)-farnesyl diphosphate = (-)-(E)-beta-caryophyllene + diphosphate. It catalyses the reaction (2E,6E)-farnesyl diphosphate = alpha-humulene + diphosphate. It participates in secondary metabolite biosynthesis; terpenoid biosynthesis. Its function is as follows. Involved in the biosynthesis of phenolic sesquiterpenes natural products. Sesquiterpene synthase converting (2E,6E)-farnesyl diphosphate (FPP) to (E)-beta-caryophyllene and alpha-humulene. The polypeptide is (E)-beta-caryophyllene synthase (Origanum vulgare (Wild marjoram)).